A 192-amino-acid polypeptide reads, in one-letter code: CASP-like protein 1E1 (192 aa).

Positions 1-22 (MDSQNKNSVDAMDGIESRGMKE) are disordered. At 1-29 (MDSQNKNSVDAMDGIESRGMKERGGRTNS) the chain is on the cytoplasmic side. Residues 30–50 (FLVLRVLAFVLTSTAAIVHGV) traverse the membrane as a helical segment. Over 51-81 (NNQTETVPIQLTSSMPPLYVPVVAKWHYLSA) the chain is Extracellular. N-linked (GlcNAc...) asparagine glycosylation is present at asparagine 52. A helical membrane pass occupies residues 82 to 102 (FVFFVVSNAIACSYAAISVML). Residues 103–118 (SFCGKKSMVPIILTLD) lie on the Cytoplasmic side of the membrane. A helical transmembrane segment spans residues 119–139 (LLMVALLFSSNGAATAIGVMG). Topologically, residues 140–161 (YKGNSHVKWNKVCNVFGKFCNQ) are extracellular. The helical transmembrane segment at 162 to 182 (VAASVVLSLIGSIVFVLLVML) threads the bilayer. Over 183-192 (TAFRLHNKSK) the chain is Cytoplasmic.

This sequence belongs to the Casparian strip membrane proteins (CASP) family. In terms of assembly, homodimer and heterodimers.

Its subcellular location is the cell membrane. This chain is CASP-like protein 1E1, found in Ricinus communis (Castor bean).